Consider the following 306-residue polypeptide: Ribonuclease Z (306 aa).

Zn(2+) contacts are provided by H63, H65, D67, H68, H141, D208, and H266. The active-site Proton acceptor is the D67.

This sequence belongs to the RNase Z family. As to quaternary structure, homodimer. The cofactor is Zn(2+).

The catalysed reaction is Endonucleolytic cleavage of RNA, removing extra 3' nucleotides from tRNA precursor, generating 3' termini of tRNAs. A 3'-hydroxy group is left at the tRNA terminus and a 5'-phosphoryl group is left at the trailer molecule.. Functionally, zinc phosphodiesterase, which displays some tRNA 3'-processing endonuclease activity. Probably involved in tRNA maturation, by removing a 3'-trailer from precursor tRNA. This Chlamydia caviae (strain ATCC VR-813 / DSM 19441 / 03DC25 / GPIC) (Chlamydophila caviae) protein is Ribonuclease Z.